A 140-amino-acid polypeptide reads, in one-letter code: UPF0132 membrane protein MJ1527 (140 aa).

3 helical membrane passes run 40–60 (MEGVLCYLLFWISGLIFLLLE), 70–90 (AMQSFITFLSLNLIAIIVSAI), and 92–112 (IIGWVASTLINIAIIILWIVG).

Belongs to the UPF0132 family.

The protein localises to the cell membrane. The sequence is that of UPF0132 membrane protein MJ1527 from Methanocaldococcus jannaschii (strain ATCC 43067 / DSM 2661 / JAL-1 / JCM 10045 / NBRC 100440) (Methanococcus jannaschii).